The chain runs to 124 residues: Large ribosomal subunit protein uL18 (124 aa).

This sequence belongs to the universal ribosomal protein uL18 family. As to quaternary structure, part of the 50S ribosomal subunit; part of the 5S rRNA/L5/L18/L25 subcomplex. Contacts the 5S and 23S rRNAs.

Its function is as follows. This is one of the proteins that bind and probably mediate the attachment of the 5S RNA into the large ribosomal subunit, where it forms part of the central protuberance. The protein is Large ribosomal subunit protein uL18 of Caldicellulosiruptor saccharolyticus (strain ATCC 43494 / DSM 8903 / Tp8T 6331).